Consider the following 290-residue polypeptide: Acetyl-coenzyme A carboxylase carboxyl transferase subunit beta (290 aa).

A CoA carboxyltransferase N-terminal domain is found at 27–290 (LWHKCPSCEA…FTHSPSPVSA (264 aa)). Zn(2+) is bound by residues C31, C34, C50, and C53. The C4-type zinc-finger motif lies at 31 to 53 (CPSCEAVLYRPELEKTLDVCPKC).

It belongs to the AccD/PCCB family. As to quaternary structure, acetyl-CoA carboxylase is a heterohexamer composed of biotin carboxyl carrier protein (AccB), biotin carboxylase (AccC) and two subunits each of ACCase subunit alpha (AccA) and ACCase subunit beta (AccD). It depends on Zn(2+) as a cofactor.

It localises to the cytoplasm. It catalyses the reaction N(6)-carboxybiotinyl-L-lysyl-[protein] + acetyl-CoA = N(6)-biotinyl-L-lysyl-[protein] + malonyl-CoA. It participates in lipid metabolism; malonyl-CoA biosynthesis; malonyl-CoA from acetyl-CoA: step 1/1. Component of the acetyl coenzyme A carboxylase (ACC) complex. Biotin carboxylase (BC) catalyzes the carboxylation of biotin on its carrier protein (BCCP) and then the CO(2) group is transferred by the transcarboxylase to acetyl-CoA to form malonyl-CoA. In Pseudomonas paraeruginosa (strain DSM 24068 / PA7) (Pseudomonas aeruginosa (strain PA7)), this protein is Acetyl-coenzyme A carboxylase carboxyl transferase subunit beta.